The chain runs to 153 residues: Zinc finger protein GIS2 (153 aa).

CCHC-type zinc fingers lie at residues 4-21, 23-40, 47-64, 65-82, 92-109, 116-133, and 135-152; these read KACY…DCDS, RLCY…DCTM, KQCY…ECTV, QRCF…ECPE, VSCY…DCMK, LKCY…DCQN, and RLCY…DCPK.

The protein localises to the cytoplasm. May act in the sexual differentiation pathway. In Saccharomyces cerevisiae (strain ATCC 204508 / S288c) (Baker's yeast), this protein is Zinc finger protein GIS2 (GIS2).